The primary structure comprises 667 residues: Receptor for retinol uptake STRA6 (667 aa).

Over residues 1-13 (MSSQPAGNQTSPG) the composition is skewed to polar residues. Residues 1 to 20 (MSSQPAGNQTSPGATEDYSY) form a disordered region. Over 1–50 (MSSQPAGNQTSPGATEDYSYGSWYIDEPQGGEELQPEGEVPSCHTSIPPG) the chain is Extracellular. Residue Asn8 is glycosylated (N-linked (GlcNAc...) asparagine). The chain crosses the membrane as a helical span at residues 51-71 (LYHACLASLSILVLLLLAMLV). Residues 72 to 100 (RRRQLWPDCVRGRPGLPSPVDFLAGDRPR) are Cytoplasmic-facing. A helical transmembrane segment spans residues 101–121 (AVPAAVFMVLLSSLCLLLPDE). Residues 122–144 (DALPFLTLASAPSQDGKTEAPRG) are Extracellular-facing. The helical transmembrane segment at 145–165 (AWKILGLFYYAALYYPLAACA) threads the bilayer. Topologically, residues 166–168 (TAG) are cytoplasmic. Residues 169-189 (HTAAHLLGSTLSWAHLGVQVW) traverse the membrane as a helical segment. The Extracellular portion of the chain corresponds to 190 to 205 (QRAECPQVPKIYKYYS). A helical membrane pass occupies residues 206–226 (LLASLPLLLGLGFLSLWYPVQ). At 227–295 (LVRSFSRRTG…PQPGFHLPLK (69 aa)) the chain is on the cytoplasmic side. Residues 235–293 (TGAGSKGLQSSYSEEYLRNLLCRKKLGSSYHTSKHGFLSWARVCLRHCIYTPQPGFHLP) are interaction with RBP1. Residues 296–316 (LVLSATLTGTAIYQVALLLLV) form a helical membrane-spanning segment. Residues 317–367 (GVVPTIQKVRAGVTTDVSYLLAGFGIVLSEDKQEVVELVKHHLWALEVCYI) lie on the Extracellular side of the membrane. A helical membrane pass occupies residues 368 to 388 (SALVLSCLLTFLVLMRSLVTH). Topologically, residues 389-422 (RTNLRALHRGAALDLSPLHRSPHPSRQAIFCWMS) are cytoplasmic. A helical membrane pass occupies residues 423–443 (FSAYQTAFICLGLLVQQIIFF). Topologically, residues 444–473 (LGTTALAFLVLMPVLHGRNLLLFRSLESSW) are extracellular. The chain crosses the membrane as a helical span at residues 474-494 (PFWLTLALAVILQNMAAHWVF). Over 495–509 (LETHDGHPQLTNRRV) the chain is Cytoplasmic. An intramembrane region (helical) is located at residues 510 to 547 (LYAATFLLFPLNVLVGAMVATWRVLLSALYNAIHLGQM). The Cytoplasmic portion of the chain corresponds to 548–667 (DLSLLPPRAA…ALLGANGAQP (120 aa)). Tyr643 carries the phosphotyrosine modification.

In terms of assembly, homodimer. Interacts with JAK2 and STAT5. Interacts (via extracellular domains) with RBP4. Interacts (via cytoplasmic domains) with RBP1. In terms of processing, phosphorylated on tyrosine residues in response to RBP4 binding. Phosphorylation requires the presence of LRAT, suggesting it may be triggered by the uptake of retinol that is then metabolized within the cell to retinoids that function as signaling molecules. Broad expression. In adult eye expressed in sclera, retina, retinal pigment epithelium, and trabecular meshwork but not in choroid and iris.

It is found in the cell membrane. Functionally, functions as a retinol transporter. Accepts all-trans retinol from the extracellular retinol-binding protein RBP4, facilitates retinol transport across the cell membrane, and then transfers retinol to the cytoplasmic retinol-binding protein RBP1. Retinol uptake is enhanced by LRAT, an enzyme that converts retinol to all-trans retinyl esters, the storage forms of vitamin A. Contributes to the activation of a signaling cascade that depends on retinol transport and LRAT-dependent generation of retinol metabolites that then trigger activation of JAK2 and its target STAT5, and ultimately increase the expression of SOCS3 and inhibit cellular responses to insulin. Important for the homeostasis of vitamin A and its derivatives, such as retinoic acid. STRA6-mediated transport is particularly important in the eye, and under conditions of dietary vitamin A deficiency. Does not transport retinoic acid. The polypeptide is Receptor for retinol uptake STRA6 (STRA6) (Homo sapiens (Human)).